Reading from the N-terminus, the 308-residue chain is Glutaminase (308 aa).

Ser-68, Asn-118, Glu-162, Asn-169, Tyr-193, Tyr-244, and Val-262 together coordinate substrate.

This sequence belongs to the glutaminase family. Homotetramer.

It catalyses the reaction L-glutamine + H2O = L-glutamate + NH4(+). In Hahella chejuensis (strain KCTC 2396), this protein is Glutaminase.